A 758-amino-acid polypeptide reads, in one-letter code: 5-methyltetrahydropteroyltriglutamate--homocysteine methyltransferase (758 aa).

5-methyltetrahydropteroyltri-L-glutamate contacts are provided by residues 17 to 20 and Lys-117; that span reads RELK. L-homocysteine contacts are provided by residues 434–436 and Glu-487; that span reads IGS. L-methionine-binding positions include 434–436 and Glu-487; that span reads IGS. Residues 518-519 and Trp-564 each bind 5-methyltetrahydropteroyltri-L-glutamate; that span reads RC. An L-homocysteine-binding site is contributed by Asp-602. Asp-602 is a binding site for L-methionine. Glu-608 is a 5-methyltetrahydropteroyltri-L-glutamate binding site. Zn(2+) is bound by residues His-644, Cys-646, and Glu-668. The Proton donor role is filled by His-697. Cys-729 is a binding site for Zn(2+).

Belongs to the vitamin-B12 independent methionine synthase family. It depends on Zn(2+) as a cofactor.

The enzyme catalyses 5-methyltetrahydropteroyltri-L-glutamate + L-homocysteine = tetrahydropteroyltri-L-glutamate + L-methionine. The protein operates within amino-acid biosynthesis; L-methionine biosynthesis via de novo pathway; L-methionine from L-homocysteine (MetE route): step 1/1. In terms of biological role, catalyzes the transfer of a methyl group from 5-methyltetrahydrofolate to homocysteine resulting in methionine formation. This Yersinia enterocolitica serotype O:8 / biotype 1B (strain NCTC 13174 / 8081) protein is 5-methyltetrahydropteroyltriglutamate--homocysteine methyltransferase.